Here is a 530-residue protein sequence, read N- to C-terminus: Tryptophan 7-halogenase RebH (530 aa).

Positions 13, 15, 16, 39, 41, 49, and 50 each coordinate FAD. Residue lysine 79 is part of the active site. Valine 197 and threonine 348 together coordinate FAD. Residue glutamate 357 participates in L-tryptophan binding. Residues threonine 359 and glycine 360 each coordinate chloride. Isoleucine 361 contributes to the FAD binding site. Residues tyrosine 454, tyrosine 455, glutamate 461, and phenylalanine 465 each coordinate L-tryptophan.

Belongs to the flavin-dependent halogenase family. Bacterial tryptophan halogenase subfamily. As to quaternary structure, homodimer.

The enzyme catalyses L-tryptophan + FADH2 + chloride + O2 = 7-chloro-L-tryptophan + FAD + 2 H2O. In terms of biological role, involved in the biosynthesis of the indolocarbazole antitumor agent rebeccamycin. Catalyzes the chlorination of tryptophan (Trp) at C7 position to yield 7-chlorotryptophan. It is also able to use bromide ions to generate monobrominated Trp. This chain is Tryptophan 7-halogenase RebH (rebH), found in Lentzea aerocolonigenes (Lechevalieria aerocolonigenes).